The following is a 271-amino-acid chain: Co-chaperone protein DjlA (271 aa).

Residues 1–6 (MQYWGK) lie on the Periplasmic side of the membrane. The chain crosses the membrane as a helical span at residues 7–31 (IIGVAVALLMGGGFWGVVLGLLIGH). The Cytoplasmic portion of the chain corresponds to 32–271 (MFDKARSRKM…ELIKQQKGFK (240 aa)). Residues 205 to 271 (DACNVLGVKP…ELIKQQKGFK (67 aa)) form the J domain.

Homodimer.

It localises to the cell inner membrane. Its function is as follows. Regulatory DnaK co-chaperone. Direct interaction between DnaK and DjlA is needed for the induction of the wcaABCDE operon, involved in the synthesis of a colanic acid polysaccharide capsule, possibly through activation of the RcsB/RcsC phosphotransfer signaling pathway. The colanic acid capsule may help the bacterium survive conditions outside the host. The sequence is that of Co-chaperone protein DjlA from Escherichia coli O157:H7.